Reading from the N-terminus, the 313-residue chain is Foldase protein PrsA (313 aa).

A signal peptide spans 1–20 (MKKKLLAGAITLLSVATLAA). Cys-21 is lipidated: N-palmitoyl cysteine. Cys-21 carries S-diacylglycerol cysteine lipidation. A PpiC domain is found at 143–241 (TPDVTAQIIR…SQYYIVKLTK (99 aa)).

Belongs to the PrsA family.

Its subcellular location is the cell membrane. It catalyses the reaction [protein]-peptidylproline (omega=180) = [protein]-peptidylproline (omega=0). In terms of biological role, plays a major role in protein secretion by helping the post-translocational extracellular folding of several secreted proteins. The chain is Foldase protein PrsA from Streptococcus pneumoniae (strain P1031).